We begin with the raw amino-acid sequence, 547 residues long: 2-succinyl-5-enolpyruvyl-6-hydroxy-3-cyclohexene-1-carboxylate synthase (547 aa).

Belongs to the TPP enzyme family. MenD subfamily. As to quaternary structure, homodimer. It depends on Mg(2+) as a cofactor. Mn(2+) serves as cofactor. Thiamine diphosphate is required as a cofactor.

It carries out the reaction isochorismate + 2-oxoglutarate + H(+) = 5-enolpyruvoyl-6-hydroxy-2-succinyl-cyclohex-3-ene-1-carboxylate + CO2. It functions in the pathway quinol/quinone metabolism; 1,4-dihydroxy-2-naphthoate biosynthesis; 1,4-dihydroxy-2-naphthoate from chorismate: step 2/7. It participates in quinol/quinone metabolism; menaquinone biosynthesis. In terms of biological role, catalyzes the thiamine diphosphate-dependent decarboxylation of 2-oxoglutarate and the subsequent addition of the resulting succinic semialdehyde-thiamine pyrophosphate anion to isochorismate to yield 2-succinyl-5-enolpyruvyl-6-hydroxy-3-cyclohexene-1-carboxylate (SEPHCHC). The sequence is that of 2-succinyl-5-enolpyruvyl-6-hydroxy-3-cyclohexene-1-carboxylate synthase from Mycobacterium sp. (strain JLS).